Here is a 250-residue protein sequence, read N- to C-terminus: MVKLAFGSVGDSFSVTSIKAYVAEFIATLLFVFAGVGSAIAFGQLTNGGALDPAGLVAIAVAHALALFVGVSVAANTSGGHLNPAVTFGLAVGGHITVLTGLFYWVAQLLGASVACLLLRFVTHGKAIPTHGVSGGTTELEGVVFEIVITFALVYTVYATAADPKKGSLGTIAPIAIGFIVGANILAAGPFSGGSMNPARSFGPAVAAADFAGNWVYWVGPLIGGGLAGLVYGDVFIGGSYQQVADQDYA.

The next 2 membrane-spanning stretches (helical) occupy residues 22 to 42 (VAEFIATLLFVFAGVGSAIAF) and 54 to 74 (AGLVAIAVAHALALFVGVSVA). The NPA 1 signature appears at 83 to 85 (NPA). The next 3 helical transmembrane spans lie at 97-119 (TVLTGLFYWVAQLLGASVACLLL), 142-162 (GVVFEIVITFALVYTVYATAA), and 169-189 (LGTIAPIAIGFIVGANILAAG). An NPA 2 motif is present at residues 197–199 (NPA). A helical transmembrane segment spans residues 218-238 (WVGPLIGGGLAGLVYGDVFIG).

Belongs to the MIP/aquaporin (TC 1.A.8) family. TIP (TC 1.A.8.10) subfamily.

It localises to the vacuole membrane. Its function is as follows. Aquaporins facilitate the transport of water and small neutral solutes across cell membranes. The protein is Aquaporin TIP2-2 (TIP2-2) of Zea mays (Maize).